The primary structure comprises 687 residues: Chloride channel protein ClC-Kb (687 aa).

Topologically, residues 1 to 50 (MEEFVGLREGSSGNPVTLQELWGPCPRIRRGIRGGLEWLKQKLFRLGEDW) are cytoplasmic. A run of 2 helical transmembrane segments spans residues 51–82 (YFLMTLGVLMALVSCAMDLAVESVVRAHQWLY) and 91–111 (LRYLSWTVYPVALVSFSSGFS). Residues 116–127 (PSSGGSGIPEVK) constitute an intramembrane region (helical). Ser-121 serves as a coordination point for chloride. Helical transmembrane passes span 141-160 (IKNFGAKVVGLSCTLACGST) and 161-180 (LFLGKVGPFVHLSVMMAAYL). A glycan (N-linked (GlcNAc...) asparagine) is linked at Asn-193. The helical intramembrane region spans 203-224 (AAAAVGVATVFAAPFSGVLFSI). Residues 236–255 (YWRGFFAATCGAFMFRLLAV) traverse the membrane as a helical segment. 4 residues coordinate Ca(2+): Glu-259, Glu-261, Asp-278, and Glu-281. The next 2 membrane-spanning stretches (helical) occupy residues 282 to 310 (IFFFVALGGLCGILGSAYLFCQRIFFGFI) and 325 to 342 (PVYSALATLVLASITYPP). Residues 349–360 (ASRLSMKQHLDS) constitute an intramembrane region (helical). The next 2 membrane-spanning stretches (helical) occupy residues 400–420 (GTLAFFLVMKFWMLILATTIP) and 421–440 (MPAGYFMPIFVYGAAIGRLF). Chloride is bound at residue Phe-426. The segment at residues 464–496 (GGYALAGAAAFSGAVTHTISTALLAFEVTGQIV) is an intramembrane region (helical). A helical membrane pass occupies residues 500–520 (PVLMAVLAANAIAQSCQPSFY). The Cytoplasmic portion of the chain corresponds to 521 to 687 (DGTVIVKKLP…SNLTNPPAPK (167 aa)). CBS domains are found at residues 551 to 609 (MNHS…EPPS) and 626 to 684 (CPTE…TNPP).

Belongs to the chloride channel (TC 2.A.49) family. CLCNKB subfamily. In terms of assembly, homodimer. Interacts with BSND. Post-translationally, N-glycosylated.

It is found in the basolateral cell membrane. It carries out the reaction chloride(in) = chloride(out). The catalysed reaction is iodide(out) = iodide(in). The enzyme catalyses nitrate(in) = nitrate(out). It catalyses the reaction bromide(in) = bromide(out). Its activity is regulated as follows. Activated by extracellular Ca(2+) and inhibited by extracellular acidic pH. Functionally, anion-selective channel permeable to small monovalent anions with ion selectivity for chloride &gt; bromide &gt; nitrate &gt; iodide. Forms a homodimeric channel where each subunit has its own ion conduction pathway. May conduct double-barreled currents controlled by two types of gates, two fast gates that control each subunit independently and a slow common gate that opens and shuts off both subunits simultaneously. Assembles with the regulatory subunit BSND/Barttin for sorting at the basolateral plasma membrane domain and functional switch to the ion conducting state. CLCNKB:BSND channels display mostly a linear current-voltage relationship controlled by common gate. Mediates chloride conductance along nephron segments, namely the thick ascending limb of Henle's loop, convoluted tubule and the collecting duct, contributing to the maintenance of systemic acid-base and electrolyte homeostasis. Conducts chloride currents in the stria vascularis of the inner ear to establish the endocochlear potential necessary for normal hearing. The sequence is that of Chloride channel protein ClC-Kb from Homo sapiens (Human).